Reading from the N-terminus, the 976-residue chain is 3-hydroxy-3-methylglutaryl-coenzyme A reductase (976 aa).

The Lumenal portion of the chain corresponds to 1-36 (MDHEGCQGQHPQQCCQWVSNAWSEFLDLLKNAETLD). Residues 36–217 (DIVIMLLGYI…FTFYTAILSI (182 aa)) form the SSD domain. The helical transmembrane segment at 37–57 (IVIMLLGYIAMHLTFVSLFLS) threads the bilayer. Residues 58–64 (MRKMGSK) are Cytoplasmic-facing. A helical membrane pass occupies residues 65 to 85 (FWLGICTLFSSVFAFLFGLVV). At 86–90 (TTKLG) the chain is on the lumenal side. Residues 91 to 111 (VPISVILLSEGLPFLVVTIGF) form a helical membrane-spanning segment. The Cytoplasmic segment spans residues 112 to 169 (EKNIVLTRAVMSHAIEHRRIQAQNSKSGKRSPDGSTQNMIQYAVQAAIKEKGFEIIRD). The chain crosses the membrane as a helical span at residues 170 to 190 (YAIEIVILVIGAASGVQGGLQ). The Lumenal portion of the chain corresponds to 191 to 193 (QFC). The helical transmembrane segment at 194–214 (FLAAWTLFFDFILLFTFYTAI) threads the bilayer. At 215–272 (LSIKLRSTVSSVMSICVWPLRMMASRRVAENVAKGDDELNRVRGDAPLFGRKSSSIPK) the chain is on the cytoplasmic side. Residues 273–293 (FKVLMILGFIFVNIVNICSIP) form a helical membrane-spanning segment. Residues 294–401 (FRNPSSMSTI…GGILKSLEDP (108 aa)) are Lumenal-facing. The helical transmembrane segment at 402 to 422 (VLSKWIVIALALSVALNGYLF) threads the bilayer. Topologically, residues 423–976 (NVARWGIKDP…RYSEVKAIDE (554 aa)) are cytoplasmic. The active-site Charge relay system is the glutamate 618. Position 624-630 (624-630 (SASRGCK)) interacts with CoA. NADP(+) contacts are provided by residues 685–687 (SRF) and 712–720 (DAMGMNMIS). Lysine 752 (charge relay system) is an active-site residue. Residue 781-783 (VLK) participates in CoA binding. Aspartate 828 functions as the Charge relay system in the catalytic mechanism. 923 to 924 (AH) provides a ligand contact to CoA. Histidine 924 serves as the catalytic Proton donor. Residues 926-954 (QHNRSAAPSRSTTPGSSHDARLTGHDQCP) form a disordered region. Residue 928-929 (NR) coordinates NADP(+). The span at 928 to 941 (NRSAAPSRSTTPGS) shows a compositional bias: polar residues. Basic and acidic residues predominate over residues 943-953 (HDARLTGHDQC).

Belongs to the HMG-CoA reductase family.

The protein resides in the endoplasmic reticulum membrane. It carries out the reaction (R)-mevalonate + 2 NADP(+) + CoA = (3S)-3-hydroxy-3-methylglutaryl-CoA + 2 NADPH + 2 H(+). It functions in the pathway metabolic intermediate biosynthesis; (R)-mevalonate biosynthesis; (R)-mevalonate from acetyl-CoA: step 3/3. In terms of biological role, HMG-CoA reductase; part of the first module of ergosterol biosynthesis pathway that includes the early steps of the pathway, conserved across all eukaryotes, and which results in the formation of mevalonate from acetyl-coenzyme A (acetyl-CoA). In this module, the cytosolic acetyl-CoA acetyltransferase catalyzes the formation of acetoacetyl-CoA. The hydroxymethylglutaryl-CoA synthase then condenses acetyl-CoA with acetoacetyl-CoA to form HMG-CoA. The rate-limiting step of the early module is the reduction to mevalonate by the 3-hydroxy-3-methylglutaryl-coenzyme A (HMG-CoA) reductase HMGR. This is 3-hydroxy-3-methylglutaryl-coenzyme A reductase from Fusarium fujikuroi (Bakanae and foot rot disease fungus).